A 328-amino-acid chain; its full sequence is Arylacetonitrilase (328 aa).

Residues 5 to 278 (VRVAVTQAEP…EGIIYADLDL (274 aa)) form the CN hydrolase domain. Glutamate 45 functions as the Proton acceptor in the catalytic mechanism. Residue lysine 125 is part of the active site. Cysteine 160 acts as the Nucleophile in catalysis.

The protein belongs to the carbon-nitrogen hydrolase superfamily. Nitrilase family.

The enzyme catalyses a nitrile + 2 H2O = a carboxylate + NH4(+). It catalyses the reaction 4-chlorophenylacetonitrile + 2 H2O = 4-chlorophenylacetate + NH4(+). Its function is as follows. Nitrilase that hydrolyzes preferentially phenylacetonitrile and (R,S)-mandelonitrile. Also acts on dinitriles like phenylenediacetonitriles (PDAs) 1,2-PDA, 1,3-PDA, and 1,4-PDA, and cyanophenyl acetonitriles (CPAs) 2-CPA and 4-CPA. In Aspergillus kawachii (strain NBRC 4308) (White koji mold), this protein is Arylacetonitrilase (nit2).